The following is a 547-amino-acid chain: Delta-guaiene synthase 2 (547 aa).

Asp299, Asp303, and Asp444 together coordinate Mg(2+). Residues 299 to 303 (DDTYD) carry the DDXXD motif motif.

Belongs to the terpene synthase family. The cofactor is Mg(2+).

It catalyses the reaction (2E,6E)-farnesyl diphosphate = delta-guaiene + diphosphate. The enzyme catalyses (2E,6E)-farnesyl diphosphate = alpha-guaiene + diphosphate. It functions in the pathway secondary metabolite biosynthesis; terpenoid biosynthesis. Its function is as follows. Sesquiterpene synthase involved in the biosynthesis of delta-guaiene (53.7%) and alpha-guaiene (44.6%), two structures composed of five- and seven-membered rings. Also produces 1.7% of alpha-humulene. In Aquilaria crassna (Eagle wood), this protein is Delta-guaiene synthase 2 (C3).